The chain runs to 439 residues: Microfibrillar-associated protein 1A (439 aa).

The segment at 1–200 (MSVPSALMKQ…SEDEMEPRLK (200 aa)) is disordered. An N-acetylserine modification is found at serine 2. The span at 23 to 34 (RNEKGEISMEKV) shows a compositional bias: basic and acidic residues. Phosphoserine is present on residues serine 52 and serine 53. Basic and acidic residues predominate over residues 61-70 (QFIKKAKEQE). Lysine 67 participates in a covalent cross-link: Glycyl lysine isopeptide (Lys-Gly) (interchain with G-Cter in SUMO2). Acidic residues predominate over residues 71–81 (AEPEEQEEDSS). Serine 94, serine 116, serine 118, serine 132, and serine 133 each carry phosphoserine. 2 stretches are compositionally biased toward acidic residues: residues 112–122 (VVGESDSEVEG) and 131–144 (DSSE…DDEE). Residues 145-163 (IERRRGMMRQRAQERKNEE) are compositionally biased toward basic and acidic residues. The span at 178-195 (ESESESEYEEYTDSEDEM) shows a compositional bias: acidic residues. Lysine 249 is covalently cross-linked (Glycyl lysine isopeptide (Lys-Gly) (interchain with G-Cter in SUMO2)). At threonine 267 the chain carries Phosphothreonine. A Glycyl lysine isopeptide (Lys-Gly) (interchain with G-Cter in SUMO2) cross-link involves residue lysine 357. The residue at position 361 (serine 361) is a Phosphoserine. Glycyl lysine isopeptide (Lys-Gly) (interchain with G-Cter in SUMO2) cross-links involve residues lysine 371, lysine 381, lysine 415, and lysine 418. Serine 432 carries the post-translational modification Phosphoserine.

Belongs to the MFAP1 family. Component of the spliceosome B complex. Interacts with PRPF38A (via N-terminal interaction domain).

It localises to the nucleus. Functionally, involved in pre-mRNA splicing as a component of the spliceosome. The polypeptide is Microfibrillar-associated protein 1A (Mus musculus (Mouse)).